A 249-amino-acid chain; its full sequence is 3-deoxy-D-manno-octulosonic acid kinase (249 aa).

Asp175 is an active-site residue.

This sequence belongs to the protein kinase superfamily. KdkA/RfaP family.

It localises to the cell inner membrane. It catalyses the reaction an alpha-Kdo-(2-&gt;6)-lipid IVA + ATP = a 4-O-phospho-alpha-Kdo-(2-&gt;6)-lipid IVA + ADP + H(+). It participates in bacterial outer membrane biogenesis; LPS core biosynthesis. Catalyzes the ATP-dependent phosphorylation of the 3-deoxy-D-manno-octulosonic acid (Kdo) residue in Kdo-lipid IV(A) at the 4-OH position. In Xanthomonas euvesicatoria pv. vesicatoria (strain 85-10) (Xanthomonas campestris pv. vesicatoria), this protein is 3-deoxy-D-manno-octulosonic acid kinase.